We begin with the raw amino-acid sequence, 146 residues long: UPF0260 protein VF_1660 (146 aa).

The protein belongs to the UPF0260 family.

The polypeptide is UPF0260 protein VF_1660 (Aliivibrio fischeri (strain ATCC 700601 / ES114) (Vibrio fischeri)).